The chain runs to 291 residues: Gamma-gliadin B (291 aa).

The N-terminal stretch at 1–19 (MKTLLILTILAMAITIATA) is a signal peptide. The segment covering 38-81 (LQPHQPFSQQPQQIFPQPQQTFPHQPQQQFPQPQQPQQQFLQPR) has biased composition (low complexity). The interval 38–137 (LQPHQPFSQQ…QSFPQQQPSL (100 aa)) is disordered. Residues 82–99 (QPFPQQPQQPYPQQPQQP) are compositionally biased toward pro residues. Composition is skewed to low complexity over residues 100 to 117 (FPQTQQPQQPFPQSKQPQ) and 125 to 137 (QPQQSFPQQQPSL).

The protein belongs to the gliadin/glutenin family.

Gliadin is the major seed storage protein in wheat. In Triticum aestivum (Wheat), this protein is Gamma-gliadin B.